The following is a 512-amino-acid chain: GMP synthase [glutamine-hydrolyzing] (512 aa).

One can recognise a Glutamine amidotransferase type-1 domain in the interval 3–196 (NILILDFGSQ…VKHICQASET (194 aa)). The Nucleophile role is filled by Cys80. Catalysis depends on residues His169 and Glu171. One can recognise a GMPS ATP-PPase domain in the interval 197–387 (WKIETIEKQL…LGLPDVLISR (191 aa)). Residue 225 to 231 (SGGVDSS) coordinates ATP.

In terms of assembly, homodimer.

It carries out the reaction XMP + L-glutamine + ATP + H2O = GMP + L-glutamate + AMP + diphosphate + 2 H(+). It participates in purine metabolism; GMP biosynthesis; GMP from XMP (L-Gln route): step 1/1. Its function is as follows. Catalyzes the synthesis of GMP from XMP. The sequence is that of GMP synthase [glutamine-hydrolyzing] from Chlamydia caviae (strain ATCC VR-813 / DSM 19441 / 03DC25 / GPIC) (Chlamydophila caviae).